Consider the following 840-residue polypeptide: E3 ubiquitin-protein ligase SH3RF1 (840 aa).

The RING-type zinc finger occupies 12–53 (CPVCLERLDASAKVLPCQHTFCKRCLLGIVGSRNELRCPECR). The disordered stretch occupies residues 105–129 (VTCSPKDGPSSQGGPQPRAQAWSPP). SH3 domains are found at residues 134 to 193 (PQLP…IIKP) and 196 to 259 (QPPP…FNSA). Disordered regions lie at residues 267 to 324 (DQPP…RHSM), 394 to 442 (TLNP…PRPS), 516 to 545 (GPASRGGVLANPPSTGGPAQKPPGNGVAGG), 578 to 633 (QARS…AASG), 652 to 723 (AASL…LGAE), and 744 to 773 (MAPGPQRRASSLDSAPVAPPPRQPCSSLGP). Residues 273 to 282 (GVAAGEGALA) show a composition bias toward low complexity. The segment covering 283–292 (TTPSSTTTKQ) has biased composition (polar residues). The tract at residues 292–362 (QPDGKKNTKK…APSQVHISTT (71 aa)) is interaction with RAC1. Ser304 carries the phosphoserine modification. Low complexity-rich tracts occupy residues 307–320 (SLSMASKASQAAQQ) and 405–424 (QAATPTGTAVAAAAGMGPRP). An interaction with AKT2 region spans residues 434–537 (HPRPQPRPSV…PSTGGPAQKP (104 aa)). The SH3 3 domain occupies 439 to 500 (PRPSVYVAIY…PGNYVAPVTR (62 aa)). The segment covering 616 to 625 (SPQPPAPLGP) has biased composition (pro residues). Basic and acidic residues predominate over residues 681–692 (RPDKDGKKEKKG). At Ser709 the chain carries Phosphoserine. Positions 781 to 840 (AVCERHRVVVSYPPQSEAELELKEGDIVFVHKKREDGWFKGTLQRNGKTGLFPGSFVENI) constitute an SH3 4 domain.

The protein belongs to the SH3RF family. In terms of assembly, interacts with RAC1; in a GTP-dependent manner. Interacts with MAP3K10/MLK2 and MAP3K11/MLK3. Interacts with MAPK8IP; this interaction leads to the PJAC complex (POSH-JIP or SH3RF1/MAPK8IP apoptotic complex) with a 1:1 ratio. Interacts with SIAH1. Interacts with HERP1. Probably part of a signaling complex that may contain SH3RF1, MAPK8IP, DLK1, MAP2K4/MKK4, MAP2K7/MKK7, MAPK8/JNK1, MAPK9/JNK2, AKT1 and AKT2. Found in a complex with RAC2, MAP3K7/TAK1, MAP2K7/MKK7, MAPK8IP1/JIP1, MAPK8/JNK1 and MAPK9/JNK2. Found in a complex with RAC1, MAP3K11/MLK3, MAP2K7/MKK7, MAPK8IP1/JIP1 and MAPK8/JNK1. Interacts with SH3RF2. Post-translationally, phosphorylated at Ser-304 by AKT1 and AKT2. When phosphorylated, it has reduced ability to bind Rac. Autoubiquitinated. Ubiquitinated by SH3RF2, leading to proteasome-mediated degradation.

The protein resides in the cytoplasm. The protein localises to the perinuclear region. It is found in the cell projection. Its subcellular location is the lamellipodium. It localises to the golgi apparatus. The protein resides in the trans-Golgi network. The catalysed reaction is S-ubiquitinyl-[E2 ubiquitin-conjugating enzyme]-L-cysteine + [acceptor protein]-L-lysine = [E2 ubiquitin-conjugating enzyme]-L-cysteine + N(6)-ubiquitinyl-[acceptor protein]-L-lysine.. Its pathway is protein modification; protein ubiquitination. In terms of biological role, has E3 ubiquitin-protein ligase activity. In the absence of an external substrate, it can catalyze self-ubiquitination. Stimulates ubiquitination of potassium channel KCNJ1, enhancing it's dynamin-dependent and clathrin-independent endocytosis. Acts as a scaffold protein that coordinates with MAPK8IP1/JIP1 in organizing different components of the JNK pathway, including RAC1 or RAC2, MAP3K11/MLK3 or MAP3K7/TAK1, MAP2K7/MKK7, MAPK8/JNK1 and/or MAPK9/JNK2 into a functional multiprotein complex to ensure the effective activation of the JNK signaling pathway. Regulates the differentiation of CD4(+) and CD8(+) T-cells and promotes T-helper 1 (Th1) cell differentiation. Regulates the activation of MAPK8/JNK1 and MAPK9/JNK2 in CD4(+) T-cells and the activation of MAPK8/JNK1 in CD8(+) T-cells. Plays a crucial role in the migration of neocortical neurons in the developing brain. Controls proper cortical neuronal migration and the formation of proximal cytoplasmic dilation in the leading process (PCDLP) in migratory neocortical neurons by regulating the proper localization of activated RAC1 and F-actin assembly. The sequence is that of E3 ubiquitin-protein ligase SH3RF1 (SH3RF1) from Bos taurus (Bovine).